Reading from the N-terminus, the 179-residue chain is ATP synthase subunit b (179 aa).

A helical transmembrane segment spans residues 27-47 (TAITFLVMLAVLAKFAWGPIV).

The protein belongs to the ATPase B chain family. F-type ATPases have 2 components, F(1) - the catalytic core - and F(0) - the membrane proton channel. F(1) has five subunits: alpha(3), beta(3), gamma(1), delta(1), epsilon(1). F(0) has three main subunits: a(1), b(2) and c(10-14). The alpha and beta chains form an alternating ring which encloses part of the gamma chain. F(1) is attached to F(0) by a central stalk formed by the gamma and epsilon chains, while a peripheral stalk is formed by the delta and b chains.

The protein localises to the cell inner membrane. Its function is as follows. F(1)F(0) ATP synthase produces ATP from ADP in the presence of a proton or sodium gradient. F-type ATPases consist of two structural domains, F(1) containing the extramembraneous catalytic core and F(0) containing the membrane proton channel, linked together by a central stalk and a peripheral stalk. During catalysis, ATP synthesis in the catalytic domain of F(1) is coupled via a rotary mechanism of the central stalk subunits to proton translocation. Functionally, component of the F(0) channel, it forms part of the peripheral stalk, linking F(1) to F(0). The chain is ATP synthase subunit b from Anaeromyxobacter dehalogenans (strain 2CP-C).